The primary structure comprises 132 residues: uncharacterized protein (132 aa).

An N-terminal signal peptide occupies residues M1 to T24. A run of 2 helical transmembrane segments spans residues Y75–I95 and E112–H132.

The protein resides in the membrane. This is an uncharacterized protein from Saccharomyces cerevisiae (strain ATCC 204508 / S288c) (Baker's yeast).